The following is a 603-amino-acid chain: Iron-sulfur clusters transporter ATM1, mitochondrial (603 aa).

Residues 20–41 traverse the membrane as a helical segment; the sequence is VLLAVGLLVGGKVLNVQVPFFF. One can recognise an ABC transmembrane type-1 domain in the interval 20–310; it reads VLLAVGLLVG…LGSVYRELRQ (291 aa). The Mitochondrial intermembrane segment spans residues 42-64; it reads REIVDSLNVDIAATGGTVATVAG. Residues 65–88 form a helical membrane-spanning segment; it reads TMIFAYGASRIGAVVSQELRNAVF. Over 89-137 the chain is Mitochondrial matrix; that stretch reads SSVAQKAIRRVATRTFGHLLNLDLNFHLSKQTGGLTRAIDRGTKGISFL. Residues 138 to 161 form a helical membrane-spanning segment; it reads LTSMVFHIVPTALEISMVCGILTY. Gln162 is a topological domain (mitochondrial intermembrane). The helical transmembrane segment at 163–183 threads the bilayer; it reads FGWEFAAVTALTMSAYTAFTI. Residues 184–249 lie on the Mitochondrial matrix side of the membrane; sequence WTTAWRTKFR…SSIKVATSLA (66 aa). Residues 189–193 and 252–255 contribute to the glutathione site; these read RTKFR and NSGQ. Residues 250-268 form a helical membrane-spanning segment; the sequence is FLNSGQNIIFSSALTIMMW. At 269-283 the chain is on the mitochondrial intermembrane side; the sequence is LGAKGIVAGSLSVGD. Residues 284–305 traverse the membrane as a helical segment; that stretch reads LVLINQLVFQLSVPLNFLGSVY. Gly302 contacts glutathione. The Mitochondrial matrix portion of the chain corresponds to 306–603; sequence RELRQSLLDM…SEREAPVPVK (298 aa). The ABC transporter domain occupies 345-581; that stretch reads IRFDNVSFGY…NGLYTELWMA (237 aa). ATP is bound by residues Tyr354 and 378-389; that span reads GPSGCGKSTLLR.

It belongs to the ABC transporter superfamily. ABCB family. Heavy Metal importer (TC 3.A.1.210) subfamily. As to quaternary structure, homodimer.

Its subcellular location is the mitochondrion inner membrane. In terms of biological role, performs an essential function in the generation of cytoplasmic iron-sulfur proteins by mediating the ATP-dependent export of Fe/S cluster precursors synthesized by NFS1 and other mitochondrial proteins. Hydrolyzes ATP. Binds glutathione and may function by transporting a glutathione-conjugated iron-sulfur compound. This is Iron-sulfur clusters transporter ATM1, mitochondrial from Chaetomium globosum (strain ATCC 6205 / CBS 148.51 / DSM 1962 / NBRC 6347 / NRRL 1970) (Soil fungus).